Reading from the N-terminus, the 227-residue chain is MAAQRPLRVLCLAGFRQSERGFREKTGALRKALRGRAELVCLSGPHPVPDPPGPEGARSDFGSCPPEEQPRGWWFSEQEADVFSALEEPAVCRGLEESLGMVAQALNRLGPFDGLLGFSQGAALAALVCALGQAGDPRFPLPRFILLVSGFCPRGIGFKESILQRPLSLPSLHVFGDTDKVIPSQESVQLASQFPGAITLTHSGGHFIPAAAPQRQAYLKFLDQFAE.

Residues 44–68 (GPHPVPDPPGPEGARSDFGSCPPEE) are disordered. Catalysis depends on charge relay system residues Ser119, Asp179, and His206.

It belongs to the LovG family. In terms of processing, proteolytically degraded in response to RA and 4HPR treatment in a time- and dose-dependent manner in the promyelocytic leukemia cell line HL-60. Ubiquitously expressed.

It carries out the reaction a carboxylic ester + H2O = an alcohol + a carboxylate + H(+). Its function is as follows. Exhibits ester hydrolase activity with a strong preference for long-chain alkyl ester substrates and high selectivity against a variety of short, branched, and substituted esters. Is able to hydrolyze ester bonds within a wide range of p-nitrophenyl derivatives (C2-C14) in vitro, with a strong preference toward substrates of &gt;8 carbons. This is Esterase OVCA2 from Homo sapiens (Human).